Reading from the N-terminus, the 665-residue chain is MLQRSESGFKDIESMQDSNADKPSRTWTSSLRSLLGLVMVAMLIVVSATLVGLDYRRARSAAIAGAEDNMDAFVGRLVDRLGALSGDTSALVSLVASVANSFLVPPPERMNDKVAVLREGIARSPHIDGVYVGYPSGAFFHVVDLDSAAWRMALDAPRGAAIAVRSMERNDQGKPFDRILFLDASGLQFAERHAASNGFDPRTRPWYRAAVNGKAPVAIGPYEMATTGNLGMTISQAHRGNPQIVIGADVVLDTITDFLSRERLTDDSVSFVLDAVGRPIIHSDSTMMRRIMASKGRDRPVATPQEDGLIESIRRNPPPAGKATLVEVGNRTYLVTVAPLESALLLSGHRVVVAAPLDELLAAANETLVQGLAVSGAVVVVAVLLALVLAHLITKSLNQLTDSANRLQDLDFATPIDVSSHVAEISTLNGAMNRARDAIFTFALYVPKELVRKGIESGHFGGRAAWRQEVTAMFTDIYDFTTISEGRSPEEVVAMLSEYFDLFSEVVAAHDGTIIQFHGDSVFAMWNAPVADTRHAEHACRCALAVEERLEAFNSAQRASGLPEFRTRFGIHTGTAVVGSVGAKERLQYTAMGDTVNVASRLEGMNKDYGTSVLASGAVVAQCKDMVKFRPLGTAKAKGRSTALDIYEVVGVVRAVNTTEAGTAA.

Residues 1–25 (MLQRSESGFKDIESMQDSNADKPSR) are disordered. The segment covering 7-24 (SGFKDIESMQDSNADKPS) has biased composition (basic and acidic residues). 2 helical membrane passes run 33–53 (SLLG…LVGL) and 373–393 (AVSG…AHLI). The HAMP domain maps to 394–444 (TKSLNQLTDSANRLQDLDFATPIDVSSHVAEISTLNGAMNRARDAIFTFAL). The region spanning 471–603 (TAMFTDIYDF…DTVNVASRLE (133 aa)) is the Guanylate cyclase domain. Mg(2+)-binding residues include Asp476 and Asp520.

This sequence belongs to the adenylyl cyclase class-3 family. The cofactor is Mg(2+).

Its subcellular location is the cell membrane. It carries out the reaction ATP = 3',5'-cyclic AMP + diphosphate. Its function is as follows. Plays essential roles in regulation of cellular metabolism by catalyzing the synthesis of a second messenger, cAMP. This is Adenylate cyclase 1 (cya1) from Rhizobium meliloti (strain 1021) (Ensifer meliloti).